The chain runs to 285 residues: Golgi to ER traffic protein 2 (285 aa).

A compositionally biased stretch (basic and acidic residues) spans 1–10 (MSELTEAEKR). The interval 1 to 71 (MSELTEAEKR…HSATPDIKED (71 aa)) is disordered. At serine 2 the chain carries N-acetylserine. Residues 2–148 (SELTEAEKRR…LDYHDYLLNR (147 aa)) are Cytoplasmic-facing. Positions 11 to 20 (RLLRERRQKK) are enriched in basic residues. Polar residues predominate over residues 24 to 42 (GGASSRLNKITGQASSHLN). Residue serine 45 is modified to Phosphoserine. Residues 49–60 (APSAAKATPPAS) show a composition bias toward low complexity. The helical transmembrane segment at 149–169 (LKAWTILVKWVFFLLPYLYLI) threads the bilayer. Residues 170–196 (TRPNSSVWPAYAFTQSAWFAPLRNPSN) lie on the Lumenal side of the membrane. 2 N-linked (GlcNAc...) asparagine glycosylation sites follow: asparagine 173 and asparagine 196. Residues 197–216 (FTRIFATFEFLSISIYYQLL) traverse the membrane as a helical segment. Over 217–263 (KNVEHKSKIKNLQDTNKLVKLVSLVPEGVIPVANLKGKLITLLQYWD) the chain is Cytoplasmic. A helical transmembrane segment spans residues 264 to 284 (LLSMLITDISFVLIVLGLLTY). Position 285 (leucine 285) is a topological domain, lumenal.

This sequence belongs to the GET2 family. In terms of assembly, component of the Golgi to ER traffic (GET) complex, which is composed of GET1, GET2 and GET3. Within the complex, GET1 and GET2 form a heterotetramer which is stabilized by phosphatidylinositol binding and which binds to the GET3 homodimer.

The protein resides in the endoplasmic reticulum membrane. It localises to the golgi apparatus membrane. Functionally, required for the post-translational delivery of tail-anchored (TA) proteins to the endoplasmic reticulum. Together with GET1, acts as a membrane receptor for soluble GET3, which recognizes and selectively binds the transmembrane domain of TA proteins in the cytosol. The GET complex cooperates with the HDEL receptor ERD2 to mediate the ATP-dependent retrieval of resident ER proteins that contain a C-terminal H-D-E-L retention signal from the Golgi to the ER. Involved in DNA replication and DNA damage response and also in cell wall function. The protein is Golgi to ER traffic protein 2 of Saccharomyces cerevisiae (strain YJM789) (Baker's yeast).